A 433-amino-acid polypeptide reads, in one-letter code: Pyroglutamylated RF-amide peptide receptor (433 aa).

Topologically, residues 1-46 (MQALNITAEQFSRLLSAHNLTREQFIHRYGLRPLVYTPELPARAKV) are extracellular. Asn5 and Asn19 each carry an N-linked (GlcNAc...) asparagine glycan. A helical transmembrane segment spans residues 47-67 (AFALAGALIFALALFGNSLVI). The Cytoplasmic portion of the chain corresponds to 68–81 (YVVTRSKAMRTVTN). A helical membrane pass occupies residues 82–102 (IFICSLALSDLLIAFFCIPVT). Residues 103-120 (MLQNISDKWLGGAFICKM) are Extracellular-facing. The chain crosses the membrane as a helical span at residues 121 to 141 (VPFVQSTAVVTEILTMTCIAV). Over 142-162 (ERHQGLVHPFKMKWQYTTRRA) the chain is Cytoplasmic. The chain crosses the membrane as a helical span at residues 163–183 (FTILGVVWLAAIIVGSPMWHV). Topologically, residues 184-212 (QRLEIKYDFLYEKEHICCLEEWASPVHQR) are extracellular. Residues 213-233 (IYSTFILVILFLLPLVVMLVL) traverse the membrane as a helical segment. At 234–271 (YSKIGYELWIKKRVGDSSALQTIHGKEMSKIARKKKRA) the chain is on the cytoplasmic side. A helical membrane pass occupies residues 272–292 (VIMMVTVVALFAACWAPFHVV). At 293–313 (HMMVEYSNFEKEYDDVTIKMV) the chain is on the extracellular side. A helical transmembrane segment spans residues 314-334 (FAVAQTIGFFNSICNPFVYAF). Residues 335-433 (MNENFKKNFL…NSTFGSGHEL (99 aa)) are Cytoplasmic-facing. The tract at residues 356–389 (SSPARKPGNSGISMMQKRAKLSRPQRPVEETKGD) is disordered.

Belongs to the G-protein coupled receptor 1 family. Highly expressed in the adrenal gland and at moderate levels in the eye and testis. Expressed widely in the brain with high levels in the hypothalamus and moderate levels in the amygdala, basal forebrain, cortex, medulla oblongata, midbrain and thalamus.

It is found in the cell membrane. Receptor for the orexigenic neuropeptide QRFP. The activity of this receptor is mediated by G proteins that modulate adenylate cyclase activity and intracellular calcium levels. The polypeptide is Pyroglutamylated RF-amide peptide receptor (Qrfpr) (Rattus norvegicus (Rat)).